The chain runs to 133 residues: Putative pre-16S rRNA nuclease (133 aa).

Belongs to the YqgF nuclease family.

The protein resides in the cytoplasm. Its function is as follows. Could be a nuclease involved in processing of the 5'-end of pre-16S rRNA. The chain is Putative pre-16S rRNA nuclease from Alcanivorax borkumensis (strain ATCC 700651 / DSM 11573 / NCIMB 13689 / SK2).